Here is a 360-residue protein sequence, read N- to C-terminus: MIVWLAELLSSQFTFLNVLTYLSVRTVMAVLTALAFSLFFGPKLIRFLQKFQIGQIVRQDGPESHFSKAGTPTMGGILILGAITFSSLLWARLDNSYVWIVLFTTLAFGAIGFMDDYLKVVRKHPDGLIARWKYFWQSVTALVLAVVLFLSATTPAELTFVMPFFKQYMPYLGLAFIPLVYFTVVGSSNAVNLTDGLDGLAIMPTVMVAAAFALIAYLTSHVNYAHYLYIPYIPKASELVVICGTIVGAGLGFLWFNTYPAQVFMGDVGSLALGALLGVIAVLVRQEILLVIMGGIFVVETLSVILQVGSYKMRKRRIFRMAPIHHHYEKKGWPEPRVIVRFWIITIVLVLIGLVTLKVR.

10 helical membrane passes run 27–47, 71–91, 98–118, 142–162, 168–188, 199–219, 236–256, 263–283, 288–308, and 338–358; these read VMAVLTALAFSLFFGPKLIRF, TPTMGGILILGAITFSSLLWA, VWIVLFTTLAFGAIGFMDDYL, LVLAVVLFLSATTPAELTFVM, YMPYLGLAFIPLVYFTVVGSS, GLAIMPTVMVAAAFALIAYLT, ASELVVICGTIVGAGLGFLWF, VFMGDVGSLALGALLGVIAVL, ILLVIMGGIFVVETLSVILQV, and VIVRFWIITIVLVLIGLVTLK.

Belongs to the glycosyltransferase 4 family. MraY subfamily. It depends on Mg(2+) as a cofactor.

It localises to the cell inner membrane. It carries out the reaction UDP-N-acetyl-alpha-D-muramoyl-L-alanyl-gamma-D-glutamyl-meso-2,6-diaminopimeloyl-D-alanyl-D-alanine + di-trans,octa-cis-undecaprenyl phosphate = di-trans,octa-cis-undecaprenyl diphospho-N-acetyl-alpha-D-muramoyl-L-alanyl-D-glutamyl-meso-2,6-diaminopimeloyl-D-alanyl-D-alanine + UMP. Its pathway is cell wall biogenesis; peptidoglycan biosynthesis. Functionally, catalyzes the initial step of the lipid cycle reactions in the biosynthesis of the cell wall peptidoglycan: transfers peptidoglycan precursor phospho-MurNAc-pentapeptide from UDP-MurNAc-pentapeptide onto the lipid carrier undecaprenyl phosphate, yielding undecaprenyl-pyrophosphoryl-MurNAc-pentapeptide, known as lipid I. The chain is Phospho-N-acetylmuramoyl-pentapeptide-transferase from Psychromonas ingrahamii (strain DSM 17664 / CCUG 51855 / 37).